Here is a 160-residue protein sequence, read N- to C-terminus: Protein FrzA (160 aa).

One can recognise a CheW-like domain in the interval 14–155 (EQEFFCFRVG…FSKLLQTARQ (142 aa)).

Functionally, necessary for proper aggregation of cells to form fruiting bodies. FRZ genes define a system of signal transduction analogous to the enterobacterial chemotaxis systems. The polypeptide is Protein FrzA (frzA) (Myxococcus xanthus).